Reading from the N-terminus, the 137-residue chain is Nucleoside diphosphate kinase (137 aa).

Positions 9, 57, 85, 91, 102, and 112 each coordinate ATP. Residue histidine 115 is the Pros-phosphohistidine intermediate of the active site.

It belongs to the NDK family. Homotetramer. The cofactor is Mg(2+).

The protein localises to the cytoplasm. The catalysed reaction is a 2'-deoxyribonucleoside 5'-diphosphate + ATP = a 2'-deoxyribonucleoside 5'-triphosphate + ADP. It catalyses the reaction a ribonucleoside 5'-diphosphate + ATP = a ribonucleoside 5'-triphosphate + ADP. Functionally, major role in the synthesis of nucleoside triphosphates other than ATP. The ATP gamma phosphate is transferred to the NDP beta phosphate via a ping-pong mechanism, using a phosphorylated active-site intermediate. The protein is Nucleoside diphosphate kinase of Geotalea daltonii (strain DSM 22248 / JCM 15807 / FRC-32) (Geobacter daltonii).